Consider the following 389-residue polypeptide: D(-)-tartrate dehydratase (389 aa).

Residues Asn-21, Asn-55, Lys-102, Tyr-156, Lys-182, 182–184, 213–215, Glu-239, Glu-265, His-322, and 341–343 each bind substrate; these read KMK, DAN, and ESY. The acceptor role is filled by Lys-184. The Mg(2+) site is built by Asp-213, Glu-239, and Glu-265. Residue His-322 is the Proton donor/acceptor of the active site.

This sequence belongs to the mandelate racemase/muconate lactonizing enzyme family. Homooctamer; tetramer of dimers. The cofactor is Mg(2+).

It catalyses the reaction (S,S)-tartrate = oxaloacetate + H2O. Functionally, catalyzes the dehydration of D-tartrate to oxaloacetate. This is D(-)-tartrate dehydratase (tarD) from Bradyrhizobium diazoefficiens (strain JCM 10833 / BCRC 13528 / IAM 13628 / NBRC 14792 / USDA 110).